A 347-amino-acid polypeptide reads, in one-letter code: Pre-B-cell leukemia transcription factor 1 (347 aa).

Positions 1–40 (MDDQPRLMHSHPGVGMAGHPSLSQHMQDGTGANEGEGGRK) are disordered. The 195-residue stretch at 38-232 (GRKQDIGDIL…VMILRSRFLD (195 aa)) folds into the PBC domain. Residues 45–124 (DILQQIMTIT…EGVAGPEKGG (80 aa)) form a PBC-A region. The PBC-B stretch occupies residues 127–232 (AAAAAAAAAS…VMILRSRFLD (106 aa)). The segment at residues 233 to 295 (ARRKRRNFNK…NKRIRYKKNI (63 aa)) is a DNA-binding region (homeobox; TALE-type). Positions 318–331 (VHGSQANSPSTPSS) are enriched in polar residues. The tract at residues 318-347 (VHGSQANSPSTPSSAGGYPSPCYQSDRRIQ) is disordered.

This sequence belongs to the TALE/PBX homeobox family. Forms a heterodimer with meis1; the interaction is necessary for neural fate induction.

The protein localises to the nucleus. Its function is as follows. Acts as a transcriptional activator in complex with isoform 2 of meis1, to induce posterior neural and neural crest gene expression, and thereby specify hindbrain and neural crest cell fate. Binds to a highly conserved region in the promoter of the neural crest gene zic3. Required for the nuclear transport or retention of meis1. The sequence is that of Pre-B-cell leukemia transcription factor 1 from Xenopus tropicalis (Western clawed frog).